Here is a 235-residue protein sequence, read N- to C-terminus: Ubiquinone/menaquinone biosynthesis C-methyltransferase UbiE (235 aa).

S-adenosyl-L-methionine contacts are provided by residues Thr-60, Asp-80, 106–107 (DV), and Ser-123.

This sequence belongs to the class I-like SAM-binding methyltransferase superfamily. MenG/UbiE family.

It catalyses the reaction a 2-demethylmenaquinol + S-adenosyl-L-methionine = a menaquinol + S-adenosyl-L-homocysteine + H(+). It carries out the reaction a 2-methoxy-6-(all-trans-polyprenyl)benzene-1,4-diol + S-adenosyl-L-methionine = a 5-methoxy-2-methyl-3-(all-trans-polyprenyl)benzene-1,4-diol + S-adenosyl-L-homocysteine + H(+). It functions in the pathway quinol/quinone metabolism; menaquinone biosynthesis; menaquinol from 1,4-dihydroxy-2-naphthoate: step 2/2. Its pathway is cofactor biosynthesis; ubiquinone biosynthesis. Methyltransferase required for the conversion of demethylmenaquinol (DMKH2) to menaquinol (MKH2) and the conversion of 2-polyprenyl-6-methoxy-1,4-benzoquinol (DDMQH2) to 2-polyprenyl-3-methyl-6-methoxy-1,4-benzoquinol (DMQH2). This is Ubiquinone/menaquinone biosynthesis C-methyltransferase UbiE from Bdellovibrio bacteriovorus (strain ATCC 15356 / DSM 50701 / NCIMB 9529 / HD100).